The sequence spans 153 residues: UPF0179 protein AF_2154 (153 aa).

This sequence belongs to the UPF0179 family.

This is UPF0179 protein AF_2154 from Archaeoglobus fulgidus (strain ATCC 49558 / DSM 4304 / JCM 9628 / NBRC 100126 / VC-16).